Reading from the N-terminus, the 201-residue chain is tRNA (guanine-N(7)-)-methyltransferase (201 aa).

Residues glutamate 33, glutamate 58, aspartate 85, and aspartate 106 each contribute to the S-adenosyl-L-methionine site. Aspartate 106 is an active-site residue. Substrate-binding positions include lysine 110, aspartate 142, and 180–183 (TTYE).

It belongs to the class I-like SAM-binding methyltransferase superfamily. TrmB family.

It carries out the reaction guanosine(46) in tRNA + S-adenosyl-L-methionine = N(7)-methylguanosine(46) in tRNA + S-adenosyl-L-homocysteine. The protein operates within tRNA modification; N(7)-methylguanine-tRNA biosynthesis. Catalyzes the formation of N(7)-methylguanine at position 46 (m7G46) in tRNA. This chain is tRNA (guanine-N(7)-)-methyltransferase, found in Mesomycoplasma hyopneumoniae (strain J / ATCC 25934 / NCTC 10110) (Mycoplasma hyopneumoniae).